A 278-amino-acid chain; its full sequence is 3-methyl-2-oxobutanoate hydroxymethyltransferase (278 aa).

The Mg(2+) site is built by Asp43 and Asp82. 3-methyl-2-oxobutanoate-binding positions include Asp43 to Ser44, Asp82, and Lys112. Residue Glu114 participates in Mg(2+) binding. The active-site Proton acceptor is Glu181.

Belongs to the PanB family. Homodecamer; pentamer of dimers. Mg(2+) serves as cofactor.

It localises to the cytoplasm. It carries out the reaction 3-methyl-2-oxobutanoate + (6R)-5,10-methylene-5,6,7,8-tetrahydrofolate + H2O = 2-dehydropantoate + (6S)-5,6,7,8-tetrahydrofolate. The protein operates within cofactor biosynthesis; (R)-pantothenate biosynthesis; (R)-pantoate from 3-methyl-2-oxobutanoate: step 1/2. Its function is as follows. Catalyzes the reversible reaction in which hydroxymethyl group from 5,10-methylenetetrahydrofolate is transferred onto alpha-ketoisovalerate to form ketopantoate. In Bacillus cereus (strain ATCC 10987 / NRS 248), this protein is 3-methyl-2-oxobutanoate hydroxymethyltransferase.